We begin with the raw amino-acid sequence, 91 residues long: Defensin-like protein 95 (91 aa).

The N-terminal stretch at 1–27 (MGSLKLSTFAIVVCLSILLISPIEVNG) is a signal peptide. Cystine bridges form between Cys31/Cys76, Cys38/Cys63, Cys47/Cys73, and Cys51/Cys75.

It belongs to the DEFL family.

The protein resides in the secreted. The chain is Defensin-like protein 95 from Arabidopsis thaliana (Mouse-ear cress).